The chain runs to 55 residues: AHIITDECISCGACAAECPVEAIHEGTGKYEVDADTCIDCGACEAVCPTGAVKAE.

4Fe-4S ferredoxin-type domains are found at residues 2-27 (HIIT…HEGT) and 28-55 (GKYE…VKAE). Residues cysteine 8, cysteine 11, cysteine 14, cysteine 18, cysteine 37, cysteine 40, cysteine 43, and cysteine 47 each coordinate [4Fe-4S] cluster.

[4Fe-4S] cluster serves as cofactor.

Ferredoxins are iron-sulfur proteins that transfer electrons in a wide variety of metabolic reactions. The protein is Ferredoxin of Thermoanaerobacterium thermosaccharolyticum (Clostridium thermosaccharolyticum).